A 431-amino-acid chain; its full sequence is MTKSSELYQKAQQTIPGGVNSPVRAFNGVGGSPLFIERADGALIFDADGKAYIDYVGSWGPMILGHNHAVIREAVIDAAQRGLSFGAPTEMEIAMAELVSELVPSMEQIRMVSSGTEATMSAIRLARGFTGRDKIMKFEGCYHGHADSLLVKAGSGALTLGQPSSPGVPADFAKHTLTATFNDLGSVRELFAANKGEIACIIVEPVAGNMNCIPPVEGFHEGLREICDQEGALLIFDEVMTGFRVALGGAQAHYNIKPDLTTLGKVIGGGMPVGAFGGRKEVMQYVAPTGPVYQAGTLSGNPVAMAAGFACLNLLKEEGNEKRLAAKTKQLAEGFKVLAEKHGIPMVVNQVGGMFGFFFTDQETVTCYEDVTKCDVERFKRFFHLMLKHGVYLAPSAFEASFTSLAHGSKEIDATLEAADRCFAILAEEAK.

At Lys-265 the chain carries N6-(pyridoxal phosphate)lysine.

The protein belongs to the class-III pyridoxal-phosphate-dependent aminotransferase family. HemL subfamily. As to quaternary structure, homodimer. It depends on pyridoxal 5'-phosphate as a cofactor.

It is found in the cytoplasm. It catalyses the reaction (S)-4-amino-5-oxopentanoate = 5-aminolevulinate. It participates in porphyrin-containing compound metabolism; protoporphyrin-IX biosynthesis; 5-aminolevulinate from L-glutamyl-tRNA(Glu): step 2/2. The sequence is that of Glutamate-1-semialdehyde 2,1-aminomutase from Vibrio campbellii (strain ATCC BAA-1116).